The chain runs to 104 residues: Large ribosomal subunit protein uL24 (104 aa).

The protein belongs to the universal ribosomal protein uL24 family. Part of the 50S ribosomal subunit.

Functionally, one of two assembly initiator proteins, it binds directly to the 5'-end of the 23S rRNA, where it nucleates assembly of the 50S subunit. In terms of biological role, one of the proteins that surrounds the polypeptide exit tunnel on the outside of the subunit. This is Large ribosomal subunit protein uL24 from Corynebacterium diphtheriae (strain ATCC 700971 / NCTC 13129 / Biotype gravis).